The sequence spans 318 residues: Acetyl-coenzyme A carboxylase carboxyl transferase subunit beta (318 aa).

The CoA carboxyltransferase N-terminal domain maps to leucine 25–alanine 294. Zn(2+) is bound by residues cysteine 29, cysteine 32, cysteine 48, and cysteine 51. A C4-type zinc finger spans residues cysteine 29–cysteine 51. Residues valine 286–aspartate 318 are disordered.

It belongs to the AccD/PCCB family. Acetyl-CoA carboxylase is a heterohexamer composed of biotin carboxyl carrier protein (AccB), biotin carboxylase (AccC) and two subunits each of ACCase subunit alpha (AccA) and ACCase subunit beta (AccD). Zn(2+) serves as cofactor.

It localises to the cytoplasm. It carries out the reaction N(6)-carboxybiotinyl-L-lysyl-[protein] + acetyl-CoA = N(6)-biotinyl-L-lysyl-[protein] + malonyl-CoA. It participates in lipid metabolism; malonyl-CoA biosynthesis; malonyl-CoA from acetyl-CoA: step 1/1. In terms of biological role, component of the acetyl coenzyme A carboxylase (ACC) complex. Biotin carboxylase (BC) catalyzes the carboxylation of biotin on its carrier protein (BCCP) and then the CO(2) group is transferred by the transcarboxylase to acetyl-CoA to form malonyl-CoA. This is Acetyl-coenzyme A carboxylase carboxyl transferase subunit beta from Jannaschia sp. (strain CCS1).